A 437-amino-acid chain; its full sequence is Sorting nexin-30 (437 aa).

Disordered regions lie at residues 1–44 (MAGG…PDLL) and 54–73 (LILPNGGTPAGTSSPASSSS). Thr38 is subject to Phosphothreonine. The residue at position 40 (Ser40) is a Phosphoserine. Residues 63-73 (AGTSSPASSSS) are compositionally biased toward low complexity. Residues 89 to 210 (RDLFVIVDDP…IFLTAKDLNA (122 aa)) enclose the PX domain. Residues Arg132, Gln134, Lys162, and Arg176 each contribute to the a 1,2-diacyl-sn-glycero-3-phospho-(1D-myo-inositol-3-phosphate) site. The BAR domain occupies 234 to 437 (KLRTRPLEFA…PLLQEKQEAK (204 aa)).

This sequence belongs to the sorting nexin family. In terms of assembly, heterodimer; heterodimerizes with SNX4.

The protein resides in the early endosome membrane. Its function is as follows. Involved in the regulation of endocytosis and in several stages of intracellular trafficking. Together with SNX4, involved in autophagosome assembly. This is Sorting nexin-30 from Homo sapiens (Human).